We begin with the raw amino-acid sequence, 443 residues long: Ribosomal protein uS12 methylthiotransferase RimO (443 aa).

The MTTase N-terminal domain maps to 10-120 (PRVGFVSLGC…VVKAVHQHLP (111 aa)). Residues C19, C55, C84, C151, C155, and C158 each coordinate [4Fe-4S] cluster. A Radical SAM core domain is found at 137–375 (LTPAHYAYLK…DFQEDISTQR (239 aa)). Positions 377-443 (ERWIGRDITV…VHDLYARPLP (67 aa)) constitute a TRAM domain.

It belongs to the methylthiotransferase family. RimO subfamily. It depends on [4Fe-4S] cluster as a cofactor.

It localises to the cytoplasm. The catalysed reaction is L-aspartate(89)-[ribosomal protein uS12]-hydrogen + (sulfur carrier)-SH + AH2 + 2 S-adenosyl-L-methionine = 3-methylsulfanyl-L-aspartate(89)-[ribosomal protein uS12]-hydrogen + (sulfur carrier)-H + 5'-deoxyadenosine + L-methionine + A + S-adenosyl-L-homocysteine + 2 H(+). In terms of biological role, catalyzes the methylthiolation of an aspartic acid residue of ribosomal protein uS12. In Aromatoleum aromaticum (strain DSM 19018 / LMG 30748 / EbN1) (Azoarcus sp. (strain EbN1)), this protein is Ribosomal protein uS12 methylthiotransferase RimO.